A 358-amino-acid chain; its full sequence is F-box/kelch-repeat protein SKIP4 (358 aa).

The F-box domain maps to 20–67; sequence ALISGVPDDISKSCLARVPREYHMAMKCVSRRWRDFVCSDEMCDYRNE. Kelch repeat units follow at residues 78–122, 123–171, 173–219, 220–269, 271–307, and 308–355; these read LCRD…VLGK, RLFV…TLDG, IIAI…VMDG, RIYI…VLDQ, FGAK…SIGN, and SIFV…SCKS.

Part of a SCF (SKP1-cullin-F-box) protein ligase complex. Interacts with SKP1A/ASK1.

Its pathway is protein modification; protein ubiquitination. This Arabidopsis thaliana (Mouse-ear cress) protein is F-box/kelch-repeat protein SKIP4 (SKIP4).